The chain runs to 1003 residues: Glycine--tRNA ligase (1003 aa).

The interval 1–310 (MSSQPLTLQD…VTAKQIPHIC (310 aa)) is glycine--tRNA ligase alpha subunit. Residues 311–1003 (QDEDFLLEIG…CFGFYAWDAL (693 aa)) are glycine--tRNA ligase beta subunit.

It belongs to the class-II aminoacyl-tRNA synthetase family.

Its subcellular location is the cytoplasm. The enzyme catalyses tRNA(Gly) + glycine + ATP = glycyl-tRNA(Gly) + AMP + diphosphate. The chain is Glycine--tRNA ligase (glyQS) from Chlamydia muridarum (strain MoPn / Nigg).